The sequence spans 531 residues: Na(+)/H(+) antiporter NhaB (531 aa).

A run of 12 helical transmembrane segments spans residues 13-33, 34-54, 90-110, 121-141, 145-165, 206-226, 242-262, 308-328, 352-372, 394-414, 456-476, and 482-502; these read FLGK…IINP, LVFF…EFIF, LVAN…IYFM, ILIG…TAAF, FLDA…FYAI, LLMH…VGEP, FIIR…LTCV, VIAV…GLIG, EEAL…AVII, LALF…VFVG, GQAA…QLSY, and MALP…SFLL.

This sequence belongs to the NhaB Na(+)/H(+) (TC 2.A.34) antiporter family.

It localises to the cell inner membrane. It carries out the reaction 2 Na(+)(in) + 3 H(+)(out) = 2 Na(+)(out) + 3 H(+)(in). Na(+)/H(+) antiporter that extrudes sodium in exchange for external protons. The protein is Na(+)/H(+) antiporter NhaB of Aliivibrio salmonicida (strain LFI1238) (Vibrio salmonicida (strain LFI1238)).